The following is a 473-amino-acid chain: 3-isopropylmalate dehydratase large subunit (473 aa).

3 residues coordinate [4Fe-4S] cluster: Cys348, Cys408, and Cys411.

It belongs to the aconitase/IPM isomerase family. LeuC type 1 subfamily. In terms of assembly, heterodimer of LeuC and LeuD. [4Fe-4S] cluster is required as a cofactor.

It catalyses the reaction (2R,3S)-3-isopropylmalate = (2S)-2-isopropylmalate. It participates in amino-acid biosynthesis; L-leucine biosynthesis; L-leucine from 3-methyl-2-oxobutanoate: step 2/4. In terms of biological role, catalyzes the isomerization between 2-isopropylmalate and 3-isopropylmalate, via the formation of 2-isopropylmaleate. The protein is 3-isopropylmalate dehydratase large subunit of Haloarcula marismortui (strain ATCC 43049 / DSM 3752 / JCM 8966 / VKM B-1809) (Halobacterium marismortui).